A 376-amino-acid chain; its full sequence is uncharacterized protein (376 aa).

The Peptidase M14 domain maps to 82–372 (KIYDDSAVEK…ATSGILWRAL (291 aa)). Positions 138, 141, and 283 each coordinate Zn(2+). Catalysis depends on Glu344, which acts as the Proton donor/acceptor.

Belongs to the peptidase M14 family. The cofactor is Zn(2+).

This is an uncharacterized protein from Bacillus subtilis (strain 168).